The sequence spans 1057 residues: Carbamoyl phosphate synthase large chain (1057 aa).

Positions 1–401 (MPKRNDIKTI…SLLKAIRSLE (401 aa)) are carboxyphosphate synthetic domain. Residues Arg-129, Arg-169, Gly-175, Gly-176, Lys-208, Ile-210, Glu-215, Gly-241, Ile-242, His-243, Gln-284, and Glu-298 each coordinate ATP. One can recognise an ATP-grasp 1 domain in the interval 133 to 327 (RTLMNDLNVP…IAKLAAKIAV (195 aa)). Positions 284, 298, and 300 each coordinate Mg(2+). Mn(2+) contacts are provided by Gln-284, Glu-298, and Asn-300. The interval 402 to 546 (YGVHHLGLPN…YGTYETENES (145 aa)) is oligomerization domain. The tract at residues 547-929 (IVTDKEKILV…ALFKGLTGSG (383 aa)) is carbamoyl phosphate synthetic domain. The ATP-grasp 2 domain maps to 671 to 861 (EALLRKINVP…MAQLAMRAII (191 aa)). Residues Arg-707, Arg-746, Leu-748, Glu-752, Gly-777, Val-778, His-779, Ser-780, Gln-820, and Glu-832 each contribute to the ATP site. Mg(2+)-binding residues include Gln-820, Glu-832, and Asn-834. The Mn(2+) site is built by Gln-820, Glu-832, and Asn-834. The region spanning 930–1057 (VEVKDHGTVL…ESMTFTMRQM (128 aa)) is the MGS-like domain. An allosteric domain region spans residues 930 to 1057 (VEVKDHGTVL…ESMTFTMRQM (128 aa)).

It belongs to the CarB family. Composed of two chains; the small (or glutamine) chain promotes the hydrolysis of glutamine to ammonia, which is used by the large (or ammonia) chain to synthesize carbamoyl phosphate. Tetramer of heterodimers (alpha,beta)4. The cofactor is Mg(2+). It depends on Mn(2+) as a cofactor.

It catalyses the reaction hydrogencarbonate + L-glutamine + 2 ATP + H2O = carbamoyl phosphate + L-glutamate + 2 ADP + phosphate + 2 H(+). The enzyme catalyses hydrogencarbonate + NH4(+) + 2 ATP = carbamoyl phosphate + 2 ADP + phosphate + 2 H(+). It participates in amino-acid biosynthesis; L-arginine biosynthesis; carbamoyl phosphate from bicarbonate: step 1/1. Its pathway is pyrimidine metabolism; UMP biosynthesis via de novo pathway; (S)-dihydroorotate from bicarbonate: step 1/3. In terms of biological role, large subunit of the glutamine-dependent carbamoyl phosphate synthetase (CPSase). CPSase catalyzes the formation of carbamoyl phosphate from the ammonia moiety of glutamine, carbonate, and phosphate donated by ATP, constituting the first step of 2 biosynthetic pathways, one leading to arginine and/or urea and the other to pyrimidine nucleotides. The large subunit (synthetase) binds the substrates ammonia (free or transferred from glutamine from the small subunit), hydrogencarbonate and ATP and carries out an ATP-coupled ligase reaction, activating hydrogencarbonate by forming carboxy phosphate which reacts with ammonia to form carbamoyl phosphate. The polypeptide is Carbamoyl phosphate synthase large chain (Staphylococcus aureus (strain MW2)).